A 1084-amino-acid polypeptide reads, in one-letter code: Probable hemoglobin and hemoglobin-haptoglobin-binding protein 3 (1084 aa).

The signal sequence occupies residues 1-24 (MTNFKFSLLACSIAFALNASTVYA). Repeat copies occupy residues 26 to 29 (QPTN), 30 to 33 (QPTN), 34 to 37 (QPTN), 38 to 41 (QPTN), 42 to 45 (QPTN), 46 to 49 (QPTN), 50 to 53 (QPTN), 54 to 57 (QPTN), 58 to 61 (QPTN), 62 to 65 (QPTN), 66 to 69 (QPTN), and 70 to 73 (QPTN). Residues 26-73 (QPTNQPTNQPTNQPTNQPTNQPTNQPTNQPTNQPTNQPTNQPTNQPTN) form a 12 X 4 AA tandem repeats of Q-P-T-N region. The span at 26–75 (QPTNQPTNQPTNQPTNQPTNQPTNQPTNQPTNQPTNQPTNQPTNQPTNQN) shows a compositional bias: low complexity. The disordered stretch occupies residues 26-77 (QPTNQPTNQPTNQPTNQPTNQPTNQPTNQPTNQPTNQPTNQPTNQPTNQNSN). A TonB box motif is present at residues 83-90 (EQINVSGS). A TBDR plug domain is found at 95–220 (NIKEKKVGET…LGGSVIFETK (126 aa)). A TBDR beta-barrel domain is found at 228 to 1084 (DKDYYLSYKR…NYRMSVQFEF (857 aa)). Residues 1067–1084 (NRFYAPGRNYRMSVQFEF) carry the TonB C-terminal box motif.

The protein belongs to the TonB-dependent receptor family. Hemoglobin/haptoglobin binding protein subfamily.

It is found in the cell outer membrane. In terms of biological role, acts as a receptor for hemoglobin or the hemoglobin/haptoglobin complex of the human host and is required for heme uptake. This is Probable hemoglobin and hemoglobin-haptoglobin-binding protein 3 from Haemophilus influenzae (strain ATCC 51907 / DSM 11121 / KW20 / Rd).